The primary structure comprises 180 residues: ATP-dependent protease subunit HslV (180 aa).

T7 is a catalytic residue. Na(+) is bound by residues A165, C168, and T171.

It belongs to the peptidase T1B family. HslV subfamily. In terms of assembly, a double ring-shaped homohexamer of HslV is capped on each side by a ring-shaped HslU homohexamer. The assembly of the HslU/HslV complex is dependent on binding of ATP.

The protein localises to the cytoplasm. The enzyme catalyses ATP-dependent cleavage of peptide bonds with broad specificity.. With respect to regulation, allosterically activated by HslU binding. In terms of biological role, protease subunit of a proteasome-like degradation complex believed to be a general protein degrading machinery. This is ATP-dependent protease subunit HslV from Geobacillus kaustophilus (strain HTA426).